The chain runs to 407 residues: Accessory Sec system protein translocase subunit SecY2 (407 aa).

The next 10 membrane-spanning stretches (helical) occupy residues 13–33 (FLWT…TLPF), 65–85 (LFSV…MFAV), 104–124 (MLLT…NLPL), 133–153 (TTIM…LIWL), 158–178 (AAMG…AYIP), 190–210 (ISSL…YLAV), 248–268 (IMYA…IHFL), 287–307 (PAWF…FAFI), 345–365 (FALV…MVVL), and 370–390 (YLRL…VFSI).

The protein belongs to the SecY/SEC61-alpha family. SecY2 subfamily. As to quaternary structure, component of the accessory SecA2/SecY2 protein translocase complex required to export cell wall proteins. May form heterotrimers with SecE and SecG subunits.

The protein localises to the cell membrane. Its function is as follows. Part of the accessory SecA2/SecY2 system specifically required for export of possible cell wall proteins. The central subunit of a protein translocation channel. The chain is Accessory Sec system protein translocase subunit SecY2 from Streptococcus sanguinis (strain SK36).